The sequence spans 99 residues: Co-chaperonin GroES (99 aa).

It belongs to the GroES chaperonin family. Heptamer of 7 subunits arranged in a ring. Interacts with the chaperonin GroEL.

It is found in the cytoplasm. Together with the chaperonin GroEL, plays an essential role in assisting protein folding. The GroEL-GroES system forms a nano-cage that allows encapsulation of the non-native substrate proteins and provides a physical environment optimized to promote and accelerate protein folding. GroES binds to the apical surface of the GroEL ring, thereby capping the opening of the GroEL channel. The chain is Co-chaperonin GroES from Methylacidiphilum infernorum (isolate V4) (Methylokorus infernorum (strain V4)).